Reading from the N-terminus, the 167-residue chain is Piercer of microtubule wall 1 protein (167 aa).

Residues 1–54 are disordered; the sequence is MSEEKPQQSAEEPEPGEPKAKPAPEEPEPGEPKAKPAPEEPEPGEPKAKPAPEK. A compositionally biased stretch (basic and acidic residues) spans 16 to 54; that stretch reads GEPKAKPAPEEPEPGEPKAKPAPEEPEPGEPKAKPAPEK.

It belongs to the PIERCE1 family. Microtubule inner protein component of sperm flagellar doublet microtubules. Interacts with CFAP53, ODAD1 and ODAD3; the interactions link the outer dynein arms docking complex (ODA-DC) to the internal microtubule inner proteins (MIP) in cilium axoneme. Expressed in brain, lung, kidney and testis.

It localises to the cytoplasm. The protein resides in the cytoskeleton. The protein localises to the cilium axoneme. Its subcellular location is the flagellum axoneme. Its function is as follows. Microtubule inner protein involved in the attachment of outer dynein arms (ODAs) to dynein-decorated doublet microtubules (DMTs) in cilia axoneme. Functions at the initial step of left-right asymmetry specification of the visceral organs. The chain is Piercer of microtubule wall 1 protein from Mus musculus (Mouse).